The primary structure comprises 67 residues: Conotoxin Cal6.35 (67 aa).

The signal sequence occupies residues 1–22 (MKLTCVLIVAVLILTACQVIAA). Disulfide bonds link Cys-43–Cys-53, Cys-46–Cys-59, and Cys-52–Cys-66.

This sequence belongs to the conotoxin O1 superfamily. In terms of tissue distribution, expressed by the venom duct.

It localises to the secreted. Functionally, probable neurotoxin. This Californiconus californicus (California cone) protein is Conotoxin Cal6.35.